A 166-amino-acid chain; its full sequence is RNA polymerase sigma factor SigV (166 aa).

The short motif at 38–51 (DIVQESIKKALSSV) is the Polymerase core binding element. The H-T-H motif DNA-binding region spans 131 to 150 (LEEIAEITGENTNTVKTRLY).

The protein belongs to the sigma-70 factor family. ECF subfamily. As to quaternary structure, interacts with RsiV.

Functionally, sigma factors are initiation factors that promote the attachment of RNA polymerase to specific initiation sites and are then released. Positively regulates the expression of proteins involved in stress responses against bacitracin, paraquat and tellurite. In Bacillus subtilis (strain 168), this protein is RNA polymerase sigma factor SigV (sigV).